A 1361-amino-acid polypeptide reads, in one-letter code: DNA-directed RNA polymerase subunit beta (1361 aa).

The protein belongs to the RNA polymerase beta chain family. The RNAP catalytic core consists of 2 alpha, 1 beta, 1 beta' and 1 omega subunit. When a sigma factor is associated with the core the holoenzyme is formed, which can initiate transcription.

It carries out the reaction RNA(n) + a ribonucleoside 5'-triphosphate = RNA(n+1) + diphosphate. DNA-dependent RNA polymerase catalyzes the transcription of DNA into RNA using the four ribonucleoside triphosphates as substrates. This Dichelobacter nodosus (strain VCS1703A) protein is DNA-directed RNA polymerase subunit beta.